A 700-amino-acid chain; its full sequence is DNA ligase (700 aa).

NAD(+)-binding positions include 42–46 (DDEYD), 91–92 (SL), and Glu126. The N6-AMP-lysine intermediate role is filled by Lys128. The NAD(+) site is built by Arg149, Glu184, Lys300, and Lys324. Residues Cys418, Cys421, Cys436, and Cys441 each contribute to the Zn(2+) site. Positions 598–686 (TRTDQLSGLN…GLGERGVAED (89 aa)) constitute a BRCT domain.

This sequence belongs to the NAD-dependent DNA ligase family. LigA subfamily. Mn(2+) serves as cofactor.

It carries out the reaction NAD(+) + (deoxyribonucleotide)n-3'-hydroxyl + 5'-phospho-(deoxyribonucleotide)m = (deoxyribonucleotide)n+m + AMP + beta-nicotinamide D-nucleotide.. Functionally, DNA ligase that catalyzes the formation of phosphodiester linkages between 5'-phosphoryl and 3'-hydroxyl groups in double-stranded DNA using NAD as a coenzyme and as the energy source for the reaction. It is essential for DNA replication and repair of damaged DNA. The chain is DNA ligase from Deinococcus radiodurans (strain ATCC 13939 / DSM 20539 / JCM 16871 / CCUG 27074 / LMG 4051 / NBRC 15346 / NCIMB 9279 / VKM B-1422 / R1).